The sequence spans 229 residues: Demethylmenaquinone methyltransferase (229 aa).

Residues T57, D77, and 101–102 each bind S-adenosyl-L-methionine; that span reads DV.

It belongs to the class I-like SAM-binding methyltransferase superfamily. MenG/UbiE family.

It catalyses the reaction a 2-demethylmenaquinol + S-adenosyl-L-methionine = a menaquinol + S-adenosyl-L-homocysteine + H(+). Its pathway is quinol/quinone metabolism; menaquinone biosynthesis; menaquinol from 1,4-dihydroxy-2-naphthoate: step 2/2. Functionally, methyltransferase required for the conversion of demethylmenaquinol (DMKH2) to menaquinol (MKH2). The polypeptide is Demethylmenaquinone methyltransferase (Chlamydia trachomatis serovar A (strain ATCC VR-571B / DSM 19440 / HAR-13)).